A 197-amino-acid polypeptide reads, in one-letter code: Shikimate kinase (197 aa).

Residue 15–20 (GSGKSS) participates in ATP binding. Serine 19 lines the Mg(2+) pocket. 3 residues coordinate substrate: aspartate 37, arginine 61, and glycine 83. Arginine 121 provides a ligand contact to ATP. Arginine 148 is a substrate binding site.

This sequence belongs to the shikimate kinase family. Monomer. Requires Mg(2+) as cofactor.

The protein resides in the cytoplasm. It carries out the reaction shikimate + ATP = 3-phosphoshikimate + ADP + H(+). The protein operates within metabolic intermediate biosynthesis; chorismate biosynthesis; chorismate from D-erythrose 4-phosphate and phosphoenolpyruvate: step 5/7. Catalyzes the specific phosphorylation of the 3-hydroxyl group of shikimic acid using ATP as a cosubstrate. In Chlorobium phaeovibrioides (strain DSM 265 / 1930) (Prosthecochloris vibrioformis (strain DSM 265)), this protein is Shikimate kinase.